Here is a 254-residue protein sequence, read N- to C-terminus: 5-oxoprolinase subunit A (254 aa).

It belongs to the LamB/PxpA family. As to quaternary structure, forms a complex composed of PxpA, PxpB and PxpC.

The catalysed reaction is 5-oxo-L-proline + ATP + 2 H2O = L-glutamate + ADP + phosphate + H(+). In terms of biological role, catalyzes the cleavage of 5-oxoproline to form L-glutamate coupled to the hydrolysis of ATP to ADP and inorganic phosphate. This Brevibacillus brevis (strain 47 / JCM 6285 / NBRC 100599) protein is 5-oxoprolinase subunit A.